We begin with the raw amino-acid sequence, 116 residues long: Signal recognition particle 14 kDa protein (116 aa).

Belongs to the SRP14 family. As to quaternary structure, heterodimer with ZK512.4/SRP9; binds RNA as heterodimer. Component of a signal recognition particle (SRP) complex that consists of a 7SL RNA molecule of 300 nucleotides and six protein subunits: srpa-72, srpa-68, SRP54, F37F2.2/SRP19, F25G6.8/SRP14 and ZK512.4/SRP9.

Its subcellular location is the cytoplasm. Component of the signal recognition particle (SRP) complex, a ribonucleoprotein complex that mediates the cotranslational targeting of secretory and membrane proteins to the endoplasmic reticulum (ER). F37F2.2/srpa-19 together with F25G6.8/srpa-14 and the Alu portion of the SRP RNA, constitutes the elongation arrest domain of SRP. The complex of F37F2.2/srpa-19 and F25G6.8/srpa-14 is required for SRP RNA binding. The sequence is that of Signal recognition particle 14 kDa protein from Caenorhabditis elegans.